A 337-amino-acid polypeptide reads, in one-letter code: Glyceraldehyde-3-phosphate dehydrogenase (337 aa).

NAD(+) contacts are provided by residues 17–18 (RI), D39, K83, and S125. Residues 156-158 (SCT), T187, R202, 215-216 (TG), and R238 contribute to the D-glyceraldehyde 3-phosphate site. The active-site Nucleophile is C157. N319 provides a ligand contact to NAD(+).

This sequence belongs to the glyceraldehyde-3-phosphate dehydrogenase family. Homotetramer.

It is found in the cytoplasm. It carries out the reaction D-glyceraldehyde 3-phosphate + phosphate + NAD(+) = (2R)-3-phospho-glyceroyl phosphate + NADH + H(+). The protein operates within carbohydrate degradation; glycolysis; pyruvate from D-glyceraldehyde 3-phosphate: step 1/5. Functionally, catalyzes the oxidative phosphorylation of glyceraldehyde 3-phosphate (G3P) to 1,3-bisphosphoglycerate (BPG) using the cofactor NAD. The first reaction step involves the formation of a hemiacetal intermediate between G3P and a cysteine residue, and this hemiacetal intermediate is then oxidized to a thioester, with concomitant reduction of NAD to NADH. The reduced NADH is then exchanged with the second NAD, and the thioester is attacked by a nucleophilic inorganic phosphate to produce BPG. The polypeptide is Glyceraldehyde-3-phosphate dehydrogenase (gapA) (Mycoplasma pneumoniae (strain ATCC 29342 / M129 / Subtype 1) (Mycoplasmoides pneumoniae)).